The following is a 74-amino-acid chain: uncharacterized protein (74 aa).

Residues 35 to 59 form a dksA C4-type zinc finger; it reads CEECDAPIPAARRAAYPSATRCVSC.

This is an uncharacterized protein from Enterobacteriaceae (Bacteriophage P2).